The following is a 222-amino-acid chain: Glutathione-specific gamma-glutamylcyclotransferase 1 (222 aa).

Positions 1–25 (MKQESAAQSTPPPSLSPAPSAQPSW) are disordered. Residue 35–40 (IFGYGS) participates in substrate binding. The active-site Proton acceptor is Glu115.

It belongs to the gamma-glutamylcyclotransferase family. ChaC subfamily. Interacts with NOTCH1 (via extracellular region).

It is found in the cytoplasm. It localises to the cytosol. Its subcellular location is the golgi apparatus. The protein localises to the trans-Golgi network. The enzyme catalyses glutathione = L-cysteinylglycine + 5-oxo-L-proline. Catalyzes the cleavage of glutathione into 5-oxo-L-proline and a Cys-Gly dipeptide. Acts specifically on glutathione, but not on other gamma-glutamyl peptides. Glutathione depletion is an important factor for apoptosis initiation and execution. Acts as a pro-apoptotic component of the unfolded protein response pathway by mediating the pro-apoptotic effects of the ATF4-ATF3-DDIT3/CHOP cascade. Negative regulator of Notch signaling pathway involved in embryonic neurogenesis: acts by inhibiting Notch cleavage by furin, maintaining Notch in an immature inactive form, thereby promoting neurogenesis in embryos. This is Glutathione-specific gamma-glutamylcyclotransferase 1 from Rattus norvegicus (Rat).